The following is a 352-amino-acid chain: 3'(2'),5'-bisphosphate nucleotidase (352 aa).

Residue aspartate 45 is the Proton acceptor of the active site. Mg(2+) contacts are provided by glutamate 68, aspartate 133, isoleucine 135, and aspartate 136. Threonine 138 (proton acceptor) is an active-site residue. Adenosine 3',5'-bisphosphate contacts are provided by threonine 138, histidine 240, serine 264, lysine 267, arginine 281, and aspartate 294. 5 residues coordinate AMP: histidine 240, serine 264, lysine 267, arginine 281, and aspartate 294. Aspartate 294 serves as a coordination point for Mg(2+).

Belongs to the inositol monophosphatase superfamily. It depends on Mg(2+) as a cofactor.

It carries out the reaction 3'-phosphoadenylyl sulfate + H2O = adenosine 5'-phosphosulfate + phosphate. The catalysed reaction is adenosine 3',5'-bisphosphate + H2O = AMP + phosphate. The enzyme catalyses adenosine 2',5'-bisphosphate + H2O = AMP + phosphate. In terms of biological role, phosphatase that converts adenosine 3'-phosphate 5'-phosphosulfate (PAPS) to adenosine 5'-phosphosulfate (APS) and 3'(2')-phosphoadenosine 5'-phosphate (PAP) to AMP. May regulate the flux of sulfur in the sulfur-activation pathway by converting PAPS to APS. Involved in osmoadaptation. The protein is 3'(2'),5'-bisphosphate nucleotidase of Emericella nidulans (strain FGSC A4 / ATCC 38163 / CBS 112.46 / NRRL 194 / M139) (Aspergillus nidulans).